The primary structure comprises 245 residues: MPYRKYREKKYETKYREAFKVFQEKIGITFTDEKLLIQAFTHSSYVNEHRKKPHEDNERLEFLGDAVLELTVSQYLFQKYPTMSEGELTKLRAAIVCEPSLVRFANELSFGSLVLLGKGEEMTGGRERPALLADVFEAFIGALYLDQGLETVWGFLKEIVYPKINEGAFSHVMDYKSQLQELIQRDGSGNIEYQILQEKGPAHNREFVSRVTLNNVALGLGSGKSKKEAEQQAAAEALKKLKEQL.

The RNase III domain occupies 19–148 (FKVFQEKIGI…FIGALYLDQG (130 aa)). Residue Glu-61 participates in Mg(2+) binding. Asp-65 is a catalytic residue. Positions 134 and 137 each coordinate Mg(2+). Glu-137 is a catalytic residue. A DRBM domain is found at 174–243 (DYKSQLQELI…AAEALKKLKE (70 aa)).

The protein belongs to the ribonuclease III family. Homodimer. Mg(2+) is required as a cofactor.

Its subcellular location is the cytoplasm. The catalysed reaction is Endonucleolytic cleavage to 5'-phosphomonoester.. Digests double-stranded RNA. Involved in the processing of primary rRNA transcript to yield the immediate precursors to the large and small rRNAs (23S and 16S). Processes some mRNAs, and tRNAs when they are encoded in the rRNA operon. Processes pre-crRNA and tracrRNA of type II CRISPR loci if present in the organism. This Bacillus cereus (strain AH187) protein is Ribonuclease 3.